The following is a 213-amino-acid chain: Pyrrolidone-carboxylate peptidase (213 aa).

Residues E78, C141, and H165 contribute to the active site.

The protein belongs to the peptidase C15 family. As to quaternary structure, homotetramer.

It localises to the cytoplasm. The enzyme catalyses Release of an N-terminal pyroglutamyl group from a polypeptide, the second amino acid generally not being Pro.. Removes 5-oxoproline from various penultimate amino acid residues except L-proline. In Finegoldia magna (strain ATCC 29328 / DSM 20472 / WAL 2508) (Peptostreptococcus magnus), this protein is Pyrrolidone-carboxylate peptidase.